A 69-amino-acid polypeptide reads, in one-letter code: Microcin H47 immunity protein MchI (69 aa).

The Cytoplasmic portion of the chain corresponds to 1–6; that stretch reads MSYKKL. The helical transmembrane segment at 7-29 threads the bilayer; that stretch reads YQLTAIFSLPLTILLVSLSSLRI. Topologically, residues 30-38 are periplasmic; the sequence is VGEGNSYVD. A helical transmembrane segment spans residues 39–61; it reads VFLSFIIFLGFIELIHGIRKILV. The Cytoplasmic portion of the chain corresponds to 62–69; sequence WSGWKNGS.

The protein resides in the cell membrane. Functionally, protects a microcin H47-producer cell against microcin H47. The polypeptide is Microcin H47 immunity protein MchI (mchI) (Escherichia coli).